Here is a 1484-residue protein sequence, read N- to C-terminus: Cystic fibrosis transmembrane conductance regulator (1484 aa).

Topologically, residues 1–77 (MQRSPLERAN…KLINALRRCF (77 aa)) are cytoplasmic. Residues 78 to 98 (FWRFMFYGLLLYLGEVTKAVQ) form a helical membrane-spanning segment. The ABC transmembrane type-1 1 domain occupies 81–365 (FMFYGLLLYL…WAVQMWYDSI (285 aa)). Over 99 to 122 (PLLLGRIIASYDPDNAHERSIAYY) the chain is Extracellular. Residues 123–146 (LGIGLCLLFIVRTLLLHPAVFGLH) traverse the membrane as a helical segment. Topologically, residues 147-195 (HIGMQMRIALFSLIYKKTLKLSSRVLDKISTGQLVSLLSNNLNKFDEGL) are cytoplasmic. Residues 196–216 (ALAHFVWIAPLQVMLLMGLLW) traverse the membrane as a helical segment. Over 217–222 (DLLQAS) the chain is Extracellular. A helical membrane pass occupies residues 223–243 (AFCGLAVLVVLVLFQAWLGHR). Over 244–298 (MMKYRDRRAGKINERLVITAEIIENIQSVKAYCWEEAMENMIESLRETELKLTRK) the chain is Cytoplasmic. The helical transmembrane segment at 299 to 319 (AAYMRYFNSSAFFFSGFFVVF) threads the bilayer. Residues 320–339 (LSVLPSMLTKGIVLRKIFTT) are Extracellular-facing. Residues 340–358 (ISFCIVLRMAVTRQFPWAV) traverse the membrane as a helical segment. At 359–859 (QMWYDSIGAI…YLRYMTIHKK (501 aa)) the chain is on the cytoplasmic side. Residues Trp401, Ser434, 458 to 465 (GSTGAGKT), and Gln493 contribute to the ATP site. The ABC transporter 1 domain maps to 423-646 (SDDKNLIFSN…RPDFSSKLMG (224 aa)). Cys524 carries S-palmitoyl cysteine lipidation. A phosphoserine mark is found at Ser549 and Ser660. The segment at 654-832 (SAERRNSILT…EEINEEDLKE (179 aa)) is disordered R region. A Phosphoserine; by PKA modification is found at Ser670. Ser686 carries the post-translational modification Phosphoserine. A Glycyl lysine isopeptide (Lys-Gly) (interchain with G-Cter in ubiquitin) cross-link involves residue Lys688. Phosphoserine is present on residues Ser700, Ser712, Ser737, Ser768, Ser791, Ser796, and Ser814. A helical transmembrane segment spans residues 860-880 (LIFVLMMCLVIFLIEVAASLV). In terms of domain architecture, ABC transmembrane type-1 2 spans 860 to 1159 (LIFVLMMCLV…AVNASIDVDS (300 aa)). At 881-922 (GLCLFKDGASRMNSTSNLNHTSTLDWFAVIVTNTSTYYMFYI) the chain is on the extracellular side. N-linked (GlcNAc...) asparagine glycosylation is found at Asn893, Asn899, and Asn913. The discontinuously helical transmembrane segment at 923–943 (YVGVADTLLALGFLRGLPLVH) threads the bilayer. The Cytoplasmic segment spans residues 944-994 (SLISVSKILHQKMLHSVLQAPMSTFNTLKTGSILNRFSKDMAILDDLLPLT). Residues 995–1015 (IFDFIQLLLIVIGAVTVVSAL) form a helical membrane-spanning segment. Residues 1016 to 1017 (QP) are Extracellular-facing. A helical membrane pass occupies residues 1018–1038 (YIFLASVPVVIAFVLLRAYFL). Residues 1039 to 1099 (RTSQQLKQLE…TANWFLYLST (61 aa)) lie on the Cytoplasmic side of the membrane. Residues 1100–1120 (LRWFQMRIEMVFVIFFILVTF) form a helical membrane-spanning segment. At 1121–1134 (ISILTTGDGEGKVG) the chain is on the extracellular side. Residues 1135-1155 (IVLTLAMNIMGTLQWAVNASI) form a helical membrane-spanning segment. At 1156–1484 (DVDSLMRSVS…TEEEVQDTRL (329 aa)) the chain is on the cytoplasmic side. Residues 1212–1445 (MTVQDLTAKY…KSVFKQAISH (234 aa)) enclose the ABC transporter 2 domain. Residues Tyr1221 and 1246–1253 (GRTGSGKS) each bind ATP. The tract at residues 1388–1484 (KTLKQAFTNC…TEEEVQDTRL (97 aa)) is interaction with GORASP2. Cys1397 carries the S-palmitoyl cysteine lipid modification. Residues Ser1446 and Ser1460 each carry the phosphoserine modification. The interval 1463–1484 (LSRPKITALQEETEEEVQDTRL) is disordered. Over residues 1473–1484 (EETEEEVQDTRL) the composition is skewed to acidic residues. Residues 1482 to 1484 (TRL) carry the PDZ-binding motif.

It belongs to the ABC transporter superfamily. ABCC family. CFTR transporter (TC 3.A.1.202) subfamily. In terms of assembly, monomer; does not require oligomerization for channel activity. May form oligomers in the membrane. Interacts with SLC26A3, SLC26A6 and NHERF1. Interacts with SHANK2. Interacts with MYO6. Interacts (via C-terminus) with GOPC (via PDZ domain); this promotes CFTR internalization and thereby decreases channel activity. Interacts with SLC4A7 through NHERF1. Found in a complex with MYO5B and RAB11A. Interacts with ANO1. Interacts with SLC26A8. Interacts with AHCYL1; the interaction increases CFTR activity. Interacts with CSE1L. The core-glycosylated form interacts with GORASP2 (via PDZ GRASP-type 1 domain) in respone to ER stress. Interacts with MARCHF2; the interaction leads to CFTR ubiqtuitination and degradation. Interacts with ADGRG2. N-glycosylated. Post-translationally, phosphorylated; cAMP treatment promotes phosphorylation and activates the channel. Dephosphorylation decreases the ATPase activity (in vitro). Phosphorylation at PKA sites activates the channel. Phosphorylation at PKC sites enhances the response to phosphorylation by PKA. Phosphorylated by AMPK; this inhibits channel activity. In terms of processing, ubiquitinated, leading to its degradation in the lysosome. Deubiquitination by USP10 in early endosomes enhances its endocytic recycling to the cell membrane. Ubiquitinated by RNF185 during ER stress. Ubiquitinated by MARCHF2.

The protein resides in the apical cell membrane. It is found in the early endosome membrane. The protein localises to the cell membrane. Its subcellular location is the recycling endosome membrane. It localises to the endoplasmic reticulum membrane. The protein resides in the nucleus. It catalyses the reaction ATP + H2O + closed Cl(-) channel = ADP + phosphate + open Cl(-) channel.. The catalysed reaction is chloride(in) = chloride(out). The enzyme catalyses hydrogencarbonate(in) = hydrogencarbonate(out). It carries out the reaction ATP + H2O = ADP + phosphate + H(+). Its function is as follows. Epithelial ion channel that plays an important role in the regulation of epithelial ion and water transport and fluid homeostasis. Mediates the transport of chloride ions across the cell membrane. Possesses an intrinsic ATPase activity and utilizes ATP to gate its channel; the passive flow of anions through the channel is gated by cycles of ATP binding and hydrolysis by the ATP-binding domains. The ion channel is also permeable to HCO(3)(-); selectivity depends on the extracellular chloride concentration. Exerts its function also by modulating the activity of other ion channels and transporters. Contributes to the regulation of the pH and the ion content of the epithelial fluid layer. Modulates the activity of the epithelial sodium channel (ENaC) complex, in part by regulating the cell surface expression of the ENaC complex. May regulate bicarbonate secretion and salvage in epithelial cells by regulating the transporter SLC4A7. Can inhibit the chloride channel activity of ANO1. Plays a role in the chloride and bicarbonate homeostasis during sperm epididymal maturation and capacitation. The chain is Cystic fibrosis transmembrane conductance regulator from Ornithorhynchus anatinus (Duckbill platypus).